Consider the following 250-residue polypeptide: Urease accessory protein UreD (250 aa).

It belongs to the UreD family. In terms of assembly, ureD, UreF and UreG form a complex that acts as a GTP-hydrolysis-dependent molecular chaperone, activating the urease apoprotein by helping to assemble the nickel containing metallocenter of UreC. The UreE protein probably delivers the nickel.

Its subcellular location is the cytoplasm. Required for maturation of urease via the functional incorporation of the urease nickel metallocenter. This Aliarcobacter butzleri (strain RM4018) (Arcobacter butzleri) protein is Urease accessory protein UreD.